The following is a 352-amino-acid chain: MNETTPLLLRAARGEHVERPPVWMMRQAGRYMKVYRDLRDNHPSFRERSENPDLSYEISMQPFTAFQPDGVILFSDILTPLPGMGINFDIVESKGPLINDPIRSLKQVKDLKPLQPEESMSFVGEVLGRLRESVGNKAAVLGFVGAPWTLAAYVVEGKSSKNYAVIKAMAFQEPELLHQLLNHFAESIANYLSYQIQSGAQVVQMFDSWAGQLSPQDYDEFAAPYQQKVVNLVKEKHPDTPMILYISGSAGVLERMGQTGVDIVSLDWTVDMADGLKRLPQSVGVQGNVDPGLLFGTPDAIRSRIVDVVKKAKGRKHILNLGHGILPGTPEENARVFFEAGKNVNELIKVSS.

Residues 26 to 30 (RQAGR), D76, Y153, S208, and H323 each bind substrate.

Belongs to the uroporphyrinogen decarboxylase family. Homodimer.

The protein resides in the cytoplasm. It carries out the reaction uroporphyrinogen III + 4 H(+) = coproporphyrinogen III + 4 CO2. It participates in porphyrin-containing compound metabolism; protoporphyrin-IX biosynthesis; coproporphyrinogen-III from 5-aminolevulinate: step 4/4. In terms of biological role, catalyzes the decarboxylation of four acetate groups of uroporphyrinogen-III to yield coproporphyrinogen-III. The sequence is that of Uroporphyrinogen decarboxylase from Prochlorococcus marinus (strain NATL1A).